The following is a 508-amino-acid chain: DNA-directed RNA polymerase subunit alpha (508 aa).

The interval 1 to 380 is alpha N-terminal domain (alpha-NTD); the sequence is MKHILLSCVE…HLFSPFLQTH (380 aa). The interval 434-508 is alpha C-terminal domain (alpha-CTD); the sequence is NLVTAIQTLD…LKNFGVLPTS (75 aa).

The protein belongs to the RNA polymerase alpha chain family. As to quaternary structure, in plastids the minimal PEP RNA polymerase catalytic core is composed of four subunits: alpha, beta, beta', and beta''. When a (nuclear-encoded) sigma factor is associated with the core the holoenzyme is formed, which can initiate transcription.

The protein resides in the plastid. It is found in the chloroplast. It catalyses the reaction RNA(n) + a ribonucleoside 5'-triphosphate = RNA(n+1) + diphosphate. Its function is as follows. DNA-dependent RNA polymerase catalyzes the transcription of DNA into RNA using the four ribonucleoside triphosphates as substrates. This chain is DNA-directed RNA polymerase subunit alpha (rpoA), found in Oltmannsiellopsis viridis (Marine flagellate).